The following is a 241-amino-acid chain: Uridylate kinase (241 aa).

Residues 10-13 (KLSG), Gly-53, and Arg-57 contribute to the ATP site. UMP is bound by residues Asp-72 and 133 to 140 (AGSPYFST). ATP-binding residues include Asn-161, Tyr-167, and Asp-170.

It belongs to the UMP kinase family. Homohexamer.

It localises to the cytoplasm. It catalyses the reaction UMP + ATP = UDP + ADP. Its pathway is pyrimidine metabolism; CTP biosynthesis via de novo pathway; UDP from UMP (UMPK route): step 1/1. Inhibited by UTP. Its function is as follows. Catalyzes the reversible phosphorylation of UMP to UDP. This is Uridylate kinase from Onion yellows phytoplasma (strain OY-M).